We begin with the raw amino-acid sequence, 260 residues long: Cytosolic Fe-S cluster assembly factor Nubp2 homolog (260 aa).

Glycine 14–serine 21 contacts ATP. The [4Fe-4S] cluster site is built by cysteine 188 and cysteine 191.

The protein belongs to the Mrp/NBP35 ATP-binding proteins family. NUBP2/CFD1 subfamily. Heterotetramer of 2 Nubp1 and 2 Nubp2 chains. The cofactor is [4Fe-4S] cluster.

It is found in the cytoplasm. In terms of biological role, component of the cytosolic iron-sulfur (Fe/S) protein assembly (CIA) machinery. Required for maturation of extramitochondrial Fe-S proteins. The Nubp1-Nubp2 heterotetramer forms a Fe-S scaffold complex, mediating the de novo assembly of an Fe-S cluster and its transfer to target apoproteins. The protein is Cytosolic Fe-S cluster assembly factor Nubp2 homolog of Drosophila simulans (Fruit fly).